Reading from the N-terminus, the 1034-residue chain is Presequence protease, mitochondrial (1034 aa).

The transit peptide at 1-26 (MLKTRLKQSRAISRVVRRYACSHPIS) directs the protein to the mitochondrion. Residue His-97 coordinates Zn(2+). Residue Glu-100 is the Proton acceptor of the active site. Zn(2+) is bound at residue His-101. Glu-173 is an active-site residue. Glu-198 is a Zn(2+) binding site.

The protein belongs to the peptidase M16 family. PreP subfamily. In terms of assembly, monomer and homodimer; homodimerization is induced by binding of the substrate. It depends on Zn(2+) as a cofactor.

The protein localises to the mitochondrion intermembrane space. Its subcellular location is the mitochondrion matrix. Degrades mitochondrial transit peptides after their cleavage in the intermembrane space or in the matrix, and presequence peptides; clearance of these peptides is required to keep the presequence processing machinery running. Preferentially cleaves the N-terminal side of paired basic amino acid residues. Also degrades other unstructured peptides. May function as an ATP-dependent peptidase as opposed to a metalloendopeptidase. The protein is Presequence protease, mitochondrial (CYM1) of Candida albicans (strain SC5314 / ATCC MYA-2876) (Yeast).